Reading from the N-terminus, the 215-residue chain is Pyrrolidone-carboxylate peptidase (215 aa).

Catalysis depends on residues glutamate 80, cysteine 143, and histidine 167.

The protein belongs to the peptidase C15 family. Homotetramer.

The protein localises to the cytoplasm. The catalysed reaction is Release of an N-terminal pyroglutamyl group from a polypeptide, the second amino acid generally not being Pro.. Its function is as follows. Removes 5-oxoproline from various penultimate amino acid residues except L-proline. The polypeptide is Pyrrolidone-carboxylate peptidase (Yersinia pseudotuberculosis serotype O:1b (strain IP 31758)).